A 393-amino-acid polypeptide reads, in one-letter code: Phosphatidate cytidylyltransferase (393 aa).

8 helical membrane-spanning segments follow: residues 49–69 (NFFR…WISV), 73–93 (IYSF…IIGI), 108–128 (IILG…IMMM), 141–161 (LSFV…ASLR), 171–191 (LFAL…CAIF), 198–218 (FWFV…YVVG), 237–257 (GFIG…HLHV), and 290–310 (IHII…GFLA).

Belongs to the CDS family.

The protein resides in the membrane. The enzyme catalyses a 1,2-diacyl-sn-glycero-3-phosphate + CTP + H(+) = a CDP-1,2-diacyl-sn-glycerol + diphosphate. Its pathway is phospholipid metabolism; CDP-diacylglycerol biosynthesis; CDP-diacylglycerol from sn-glycerol 3-phosphate: step 3/3. In Encephalitozoon cuniculi (strain GB-M1) (Microsporidian parasite), this protein is Phosphatidate cytidylyltransferase (CDS1).